The primary structure comprises 322 residues: Phospholipase A1 (322 aa).

Residues 1–18 form the signal peptide; sequence MNFKYSILFICFGTLDRG. A disulfide bond links Cys23 and Cys106. Residue Ser156 is the Nucleophile of the active site. Asp184 (charge relay system) is an active-site residue. 2 cysteine pairs are disulfide-bonded: Cys195-Cys200 and Cys238-Cys246. Residue His248 is the Charge relay system of the active site. 3 cysteine pairs are disulfide-bonded: Cys263–Cys290, Cys264–Cys315, and Cys283–Cys288.

Belongs to the AB hydrolase superfamily. Lipase family. In terms of processing, contains six disulfide bonds. Post-translationally, is not glycosylated. In terms of tissue distribution, expressed by the venom gland.

The protein resides in the secreted. The enzyme catalyses a 1,2-diacyl-sn-glycero-3-phosphocholine + H2O = a 2-acyl-sn-glycero-3-phosphocholine + a fatty acid + H(+). Its function is as follows. Catalyzes the hydrolysis of phosphatidylcholine with phospholipase A1 activity. Shows hemolytic activity. Acts as an allergen. The polypeptide is Phospholipase A1 (Polybia paulista (Neotropical social wasp)).